A 150-amino-acid chain; its full sequence is MELNTKNFGIIHYNEEDVIYFEEGIPGFEELHNFLIIGDEEEDMPFKWLQSIDNPDIAFVVIDPRVFKPDYTFEIDEELKNFLAVEDVNHLLIFVIVVIPEKIEEMTANLKAPIIINAENNRGVQIILDNDKYLIKHPILEELKNAYSHA.

The protein belongs to the FliW family. Interacts with translational regulator CsrA and flagellin(s).

The protein resides in the cytoplasm. Acts as an anti-CsrA protein, binds CsrA and prevents it from repressing translation of its target genes, one of which is flagellin. Binds to flagellin and participates in the assembly of the flagellum. The sequence is that of Flagellar assembly factor FliW from Caldanaerobacter subterraneus subsp. tengcongensis (strain DSM 15242 / JCM 11007 / NBRC 100824 / MB4) (Thermoanaerobacter tengcongensis).